Consider the following 492-residue polypeptide: Acyl-CoA-binding domain-containing protein 5 (492 aa).

An ACB domain is found at 8–97 (HATRFEAAVK…MKKILESMPM (90 aa)). Residues 19–28 (IQSLPKNGSF), 39–43 (YSFYK), lysine 65, and tyrosine 84 each bind an acyl-CoA. 2 disordered regions span residues 141-162 (AVNG…GLRE) and 335-399 (VKCG…DRGP). Over residues 153–162 (AESEEEGLRE) the composition is skewed to acidic residues. Basic and acidic residues predominate over residues 335 to 360 (VKCGGEDGKASNGAPHKEKKDGEKAD). The segment covering 378–388 (GSQGGQMGNGG) has biased composition (gly residues). The segment covering 389–399 (DGERWGSDRGP) has biased composition (basic and acidic residues). Positions 405–431 (EQIAVVLMRLQEDMQNVLQRLHMLEAV) form a coiled coil. A helical transmembrane segment spans residues 464–484 (GVLAFAIVWPFIAQWLVHVYL).

It belongs to the ATG37 family.

The protein localises to the peroxisome membrane. Acyl-CoA binding protein which acts as the peroxisome receptor for pexophagy but is dispensable for aggrephagy and nonselective autophagy. Binds medium- and long-chain acyl-CoA esters. The polypeptide is Acyl-CoA-binding domain-containing protein 5 (ACBD5) (Gallus gallus (Chicken)).